The primary structure comprises 315 residues: Phosphatidylglycerol--prolipoprotein diacylglyceryl transferase (315 aa).

The next 2 membrane-spanning stretches (helical) occupy residues 19 to 39 (FTIHMYAICILIGICVAVWIL) and 93 to 113 (VWEGGMAIFGGISVGTLVAFL). Arginine 141 lines the a 1,2-diacyl-sn-glycero-3-phospho-(1'-sn-glycerol) pocket. A run of 2 helical transmembrane segments spans residues 188 to 208 (LFHPTFLYEMIWNLIGAALII) and 256 to 276 (VWTAIIVFVLGCILFVVLYQY).

It belongs to the Lgt family.

The protein resides in the cell membrane. The catalysed reaction is L-cysteinyl-[prolipoprotein] + a 1,2-diacyl-sn-glycero-3-phospho-(1'-sn-glycerol) = an S-1,2-diacyl-sn-glyceryl-L-cysteinyl-[prolipoprotein] + sn-glycerol 1-phosphate + H(+). It functions in the pathway protein modification; lipoprotein biosynthesis (diacylglyceryl transfer). In terms of biological role, catalyzes the transfer of the diacylglyceryl group from phosphatidylglycerol to the sulfhydryl group of the N-terminal cysteine of a prolipoprotein, the first step in the formation of mature lipoproteins. The protein is Phosphatidylglycerol--prolipoprotein diacylglyceryl transferase of Bifidobacterium longum (strain DJO10A).